The chain runs to 59 residues: MLTWALIFFIIAIIAAAFGFGGIAVAAAGIAKILFFLFLVMFVIFLIMGLVGRRGPPPV.

2 helical membrane-spanning segments follow: residues 5 to 25 (ALIF…GIAV) and 30 to 50 (IAKI…IMGL).

The protein belongs to the UPF0391 family.

It localises to the cell membrane. The protein is UPF0391 membrane protein lpp2589 of Legionella pneumophila (strain Paris).